Consider the following 315-residue polypeptide: Cytochrome f (315 aa).

A signal peptide spans 1–30; sequence MRTFLKFSTLVSKGVLVLVCSFFLTASSNA. Residues Tyr-31, Cys-51, Cys-54, and His-55 each contribute to the heme site. Residues 281-300 traverse the membrane as a helical segment; sequence IQGLLVFFLFVLLAQVFLVL.

The protein belongs to the cytochrome f family. The 4 large subunits of the cytochrome b6-f complex are cytochrome b6, subunit IV (17 kDa polypeptide, petD), cytochrome f and the Rieske protein, while the 4 small subunits are PetG, PetL, PetM and PetN. The complex functions as a dimer. The cofactor is heme.

Its subcellular location is the plastid. It localises to the chloroplast thylakoid membrane. Its function is as follows. Component of the cytochrome b6-f complex, which mediates electron transfer between photosystem II (PSII) and photosystem I (PSI), cyclic electron flow around PSI, and state transitions. This Chlorella vulgaris (Green alga) protein is Cytochrome f (petA).